We begin with the raw amino-acid sequence, 180 residues long: ATP-dependent protease subunit HslV (180 aa).

Residue Thr5 is part of the active site. Na(+) contacts are provided by Gly161, Cys164, and Thr167.

This sequence belongs to the peptidase T1B family. HslV subfamily. As to quaternary structure, a double ring-shaped homohexamer of HslV is capped on each side by a ring-shaped HslU homohexamer. The assembly of the HslU/HslV complex is dependent on binding of ATP.

Its subcellular location is the cytoplasm. The catalysed reaction is ATP-dependent cleavage of peptide bonds with broad specificity.. Allosterically activated by HslU binding. Its function is as follows. Protease subunit of a proteasome-like degradation complex believed to be a general protein degrading machinery. This is ATP-dependent protease subunit HslV from Campylobacter jejuni subsp. jejuni serotype O:2 (strain ATCC 700819 / NCTC 11168).